The sequence spans 317 residues: Acetyl-coenzyme A carboxylase carboxyl transferase subunit alpha (317 aa).

The 254-residue stretch at 40–293 folds into the CoA carboxyltransferase C-terminal domain; the sequence is LEKRSADALK…GDIIAASLRS (254 aa).

This sequence belongs to the AccA family. Acetyl-CoA carboxylase is a heterohexamer composed of biotin carboxyl carrier protein (AccB), biotin carboxylase (AccC) and two subunits each of ACCase subunit alpha (AccA) and ACCase subunit beta (AccD).

It is found in the cytoplasm. The enzyme catalyses N(6)-carboxybiotinyl-L-lysyl-[protein] + acetyl-CoA = N(6)-biotinyl-L-lysyl-[protein] + malonyl-CoA. It participates in lipid metabolism; malonyl-CoA biosynthesis; malonyl-CoA from acetyl-CoA: step 1/1. Functionally, component of the acetyl coenzyme A carboxylase (ACC) complex. First, biotin carboxylase catalyzes the carboxylation of biotin on its carrier protein (BCCP) and then the CO(2) group is transferred by the carboxyltransferase to acetyl-CoA to form malonyl-CoA. The polypeptide is Acetyl-coenzyme A carboxylase carboxyl transferase subunit alpha (Brucella abortus (strain S19)).